The primary structure comprises 950 residues: Translation initiation factor IF-2 (950 aa).

Basic and acidic residues-rich tracts occupy residues 128–158 (KPKV…EAKA), 165–186 (AEVK…EKKK), 200–234 (KRAE…DNRR), and 291–312 (NRRD…DGNR). The interval 128-354 (KPKVAEPVKK…NNQSSSVPAT (227 aa)) is disordered. Polar residues-rich tracts occupy residues 322 to 336 (NRNQ…NWNQ) and 343 to 353 (YQNNQSSSVPA). The tr-type G domain maps to 448–619 (ERPAVVTIMG…LLVAEVQELK (172 aa)). A G1 region spans residues 457–464 (GHVDHGKT). A GTP-binding site is contributed by 457–464 (GHVDHGKT). Positions 482 to 486 (GITQH) are G2. Residues 503–506 (DTPG) are G3. GTP-binding positions include 503–507 (DTPGH) and 557–560 (NKID). Positions 557 to 560 (NKID) are G4. Positions 595–597 (SAK) are G5.

This sequence belongs to the TRAFAC class translation factor GTPase superfamily. Classic translation factor GTPase family. IF-2 subfamily.

It is found in the cytoplasm. Its function is as follows. One of the essential components for the initiation of protein synthesis. Protects formylmethionyl-tRNA from spontaneous hydrolysis and promotes its binding to the 30S ribosomal subunits. Also involved in the hydrolysis of GTP during the formation of the 70S ribosomal complex. In Lactococcus lactis subsp. cremoris (strain MG1363), this protein is Translation initiation factor IF-2.